Here is a 139-residue protein sequence, read N- to C-terminus: D-ribose pyranase (139 aa).

The Proton donor role is filled by histidine 20. Residues aspartate 28, histidine 106, and 128 to 130 contribute to the substrate site; that span reads YAN.

This sequence belongs to the RbsD / FucU family. RbsD subfamily. As to quaternary structure, homodecamer.

It is found in the cytoplasm. The catalysed reaction is beta-D-ribopyranose = beta-D-ribofuranose. It participates in carbohydrate metabolism; D-ribose degradation; D-ribose 5-phosphate from beta-D-ribopyranose: step 1/2. Catalyzes the interconversion of beta-pyran and beta-furan forms of D-ribose. The chain is D-ribose pyranase from Haemophilus influenzae (strain 86-028NP).